Reading from the N-terminus, the 1009-residue chain is 2-oxoglutarate dehydrogenase, mitochondrial (1009 aa).

A mitochondrion-targeting transit peptide spans 1 to 39 (MLRFIPSSAKARALRRSAVTAYRLNRLTCLSSLQQNRTF). Thiamine diphosphate contacts are provided by Arg-305, Asp-404, Asn-437, Ile-439, and Gln-669. Asp-404, Asn-437, and Ile-439 together coordinate Mg(2+).

The protein belongs to the alpha-ketoglutarate dehydrogenase family. Thiamine diphosphate serves as cofactor. Requires Mg(2+) as cofactor.

The protein resides in the mitochondrion matrix. It carries out the reaction N(6)-[(R)-lipoyl]-L-lysyl-[protein] + 2-oxoglutarate + H(+) = N(6)-[(R)-S(8)-succinyldihydrolipoyl]-L-lysyl-[protein] + CO2. With respect to regulation, catabolite repressed. In terms of biological role, the 2-oxoglutarate dehydrogenase complex catalyzes the overall conversion of 2-oxoglutarate to succinyl-CoA and CO(2). It contains multiple copies of three enzymatic components: 2-oxoglutarate dehydrogenase (E1), dihydrolipoamide succinyltransferase (E2) and lipoamide dehydrogenase (E3). This chain is 2-oxoglutarate dehydrogenase, mitochondrial (kgd1), found in Schizosaccharomyces pombe (strain 972 / ATCC 24843) (Fission yeast).